Here is a 1273-residue protein sequence, read N- to C-terminus: DNA polymerase 037L (1273 aa).

The stretch at 679-837 (IRKNAITEEL…ENKSKEDIDE (159 aa)) forms a coiled coil.

It belongs to the DNA polymerase type-B family.

The catalysed reaction is DNA(n) + a 2'-deoxyribonucleoside 5'-triphosphate = DNA(n+1) + diphosphate. Functionally, DNA-directed DNA polymerase involved in viral DNA replication. The protein is DNA polymerase 037L (DPOL) of Invertebrate iridescent virus 6 (IIV-6).